The sequence spans 332 residues: Biotin synthase (332 aa).

In terms of domain architecture, Radical SAM core spans 53–282 (YFGKKVKLNM…SKEIRISGGR (230 aa)). [4Fe-4S] cluster is bound by residues cysteine 71, cysteine 75, and cysteine 78. Positions 115, 147, 207, and 277 each coordinate [2Fe-2S] cluster.

The protein belongs to the radical SAM superfamily. Biotin synthase family. In terms of assembly, homodimer. It depends on [4Fe-4S] cluster as a cofactor. Requires [2Fe-2S] cluster as cofactor.

It catalyses the reaction (4R,5S)-dethiobiotin + (sulfur carrier)-SH + 2 reduced [2Fe-2S]-[ferredoxin] + 2 S-adenosyl-L-methionine = (sulfur carrier)-H + biotin + 2 5'-deoxyadenosine + 2 L-methionine + 2 oxidized [2Fe-2S]-[ferredoxin]. It participates in cofactor biosynthesis; biotin biosynthesis; biotin from 7,8-diaminononanoate: step 2/2. Catalyzes the conversion of dethiobiotin (DTB) to biotin by the insertion of a sulfur atom into dethiobiotin via a radical-based mechanism. In Bacillus cytotoxicus (strain DSM 22905 / CIP 110041 / 391-98 / NVH 391-98), this protein is Biotin synthase.